Reading from the N-terminus, the 286-residue chain is MKNILSIQSHVVYGYAGNKSATFPMQLLGIDVWALNTVQFSNHTQYGKWTGMVIPKEQIGEIVQGIDNIGELHQCDAVLSGYIGSAEQVEEIIKAFHKIKERNPKAIYLCDPVMGHPDKGCVVADGVKEGLIKIAMAQADIITPNLVELRELSGLAVENFEQAIEAVKVILSKGPKKVLVKHLSRVGKNAAQFEMLLANNDGIWHISRPLHNFNKEPVGVGDLTAGLFLANLLNGKSDVEAFEHTANTVNDVMETTHNAGVYELQTIAAREWIVNPKSQYKAVKIG.

Substrate-binding positions include S9 and 44–45 (TQ). D111, E148, and K181 together coordinate ATP. D222 contacts substrate.

This sequence belongs to the pyridoxine kinase family. PdxY subfamily. As to quaternary structure, homodimer. The cofactor is Mg(2+).

The catalysed reaction is pyridoxal + ATP = pyridoxal 5'-phosphate + ADP + H(+). It functions in the pathway cofactor metabolism; pyridoxal 5'-phosphate salvage; pyridoxal 5'-phosphate from pyridoxal: step 1/1. In terms of biological role, pyridoxal kinase involved in the salvage pathway of pyridoxal 5'-phosphate (PLP). Catalyzes the phosphorylation of pyridoxal to PLP. This chain is Pyridoxal kinase PdxY, found in Histophilus somni (strain 129Pt) (Haemophilus somnus).